We begin with the raw amino-acid sequence, 255 residues long: Methylthioribulose-1-phosphate dehydratase (255 aa).

Cysteine 111 contributes to the substrate binding site. Zn(2+)-binding residues include histidine 128 and histidine 130. Glutamate 157 acts as the Proton donor/acceptor in catalysis. Histidine 213 contributes to the Zn(2+) binding site.

The protein belongs to the aldolase class II family. MtnB subfamily. It depends on Zn(2+) as a cofactor.

The protein localises to the cytoplasm. It catalyses the reaction 5-(methylsulfanyl)-D-ribulose 1-phosphate = 5-methylsulfanyl-2,3-dioxopentyl phosphate + H2O. The protein operates within amino-acid biosynthesis; L-methionine biosynthesis via salvage pathway; L-methionine from S-methyl-5-thio-alpha-D-ribose 1-phosphate: step 2/6. In terms of biological role, catalyzes the dehydration of methylthioribulose-1-phosphate (MTRu-1-P) into 2,3-diketo-5-methylthiopentyl-1-phosphate (DK-MTP-1-P). This is Methylthioribulose-1-phosphate dehydratase from Talaromyces stipitatus (strain ATCC 10500 / CBS 375.48 / QM 6759 / NRRL 1006) (Penicillium stipitatum).